The sequence spans 325 residues: NADH-cytochrome b5 reductase 2 (325 aa).

A helical transmembrane segment spans residues 32-48 (VPLYGGLALAAGGAYYY). In terms of domain architecture, FAD-binding FR-type spans 74–179 (QGWVDLKLAG…KGPIPKYPWE (106 aa)). 182-217 (KHDHICMIAGGTGITPMYQIIRKIFNNPNDKTKVTL) contributes to the FAD binding site.

The protein belongs to the flavoprotein pyridine nucleotide cytochrome reductase family. FAD serves as cofactor.

The protein localises to the mitochondrion outer membrane. The catalysed reaction is 2 Fe(III)-[cytochrome b5] + NADH = 2 Fe(II)-[cytochrome b5] + NAD(+) + H(+). Its function is as follows. May mediate the reduction of outer membrane cytochrome b5. The chain is NADH-cytochrome b5 reductase 2 (MCR1) from Coccidioides immitis (strain RS) (Valley fever fungus).